We begin with the raw amino-acid sequence, 223 residues long: Translation initiation factor 6 (223 aa).

It belongs to the eIF-6 family.

Functionally, binds to the 50S ribosomal subunit and prevents its association with the 30S ribosomal subunit to form the 70S initiation complex. This is Translation initiation factor 6 from Saccharolobus islandicus (strain M.16.27) (Sulfolobus islandicus).